We begin with the raw amino-acid sequence, 413 residues long: MHSLLRPSRFSANQSVLCLLQRHRVFFSSISVKPRKRMVYCVVSYRGTGFAGLQYNANVKTIQDTLFQAFARVGAVVQVNADSPKKIRMCSAARTDKGVHAIVNVLGLKVLDNQPLPHVVNLVNDILPPCIRVWKMARTFNSFSPHTVCDSRVYEYWLPVSSLLTPRPCTLEAYVIAKASEKAFPINETLSHLANLSKQDCVANSLSEPFRLSKPKLDFLKHACTMFRGTHRFHSYTTEKGFSDASSRRFLLDVRVDNLHIDKLNRQWVKLIFHGQSFMKHQIRKMVGILIHLTRTGWNAQVLLNTFNNSYRIRIPRAPAEFLLLNQPIFQAFNKKCSRFDHEPVEWSCAQKGIDQFAHSFLRTPMFDCFISSESFQSFFILQKQFQLFQDLALLTSFDFLEPSSRRDILGEK.

Aspartate 96 serves as the catalytic Nucleophile. Tyrosine 154 provides a ligand contact to substrate.

The protein belongs to the tRNA pseudouridine synthase TruA family.

The protein localises to the cytoplasm. It is found in the nucleus. The enzyme catalyses a uridine in tRNA = a pseudouridine in tRNA. This Schizosaccharomyces pombe (strain 972 / ATCC 24843) (Fission yeast) protein is Putative tRNA pseudouridine synthase C16C4.06c.